A 457-amino-acid polypeptide reads, in one-letter code: Mannose-6-phosphate isomerase (457 aa).

The Zn(2+) site is built by Q108, H110, E135, and H292. The active site involves R311.

This sequence belongs to the mannose-6-phosphate isomerase type 1 family. The cofactor is Zn(2+).

It localises to the cytoplasm. The catalysed reaction is D-mannose 6-phosphate = D-fructose 6-phosphate. It functions in the pathway nucleotide-sugar biosynthesis; GDP-alpha-D-mannose biosynthesis; alpha-D-mannose 1-phosphate from D-fructose 6-phosphate: step 1/2. Functionally, involved in the synthesis of the GDP-mannose and dolichol-phosphate-mannose required for a number of critical mannosyl transfer reactions. The protein is Mannose-6-phosphate isomerase (pmi1) of Aspergillus fumigatus (strain ATCC MYA-4609 / CBS 101355 / FGSC A1100 / Af293) (Neosartorya fumigata).